Consider the following 514-residue polypeptide: Ribonuclease Y (514 aa).

The helical transmembrane segment at 2–22 (EDLIVAIVVGAFSSAISIFVV) threads the bilayer. The KH domain occupies 204–268 (LINNIPLNDE…VATKTIRELL (65 aa)). One can recognise an HD domain in the interval 330 to 423 (ALAHTLEVAH…VCAADALSAA (94 aa)).

Belongs to the RNase Y family.

It localises to the cell membrane. Functionally, endoribonuclease that initiates mRNA decay. The sequence is that of Ribonuclease Y from Aliarcobacter butzleri (strain RM4018) (Arcobacter butzleri).